Here is a 602-residue protein sequence, read N- to C-terminus: Aspartate--tRNA(Asp/Asn) ligase (602 aa).

Glu176 is an L-aspartate binding site. The segment at 200-203 (QQFK) is aspartate. L-aspartate is bound by residues Arg222 and His452. An ATP-binding site is contributed by 222 to 224 (RDE). Residue Glu490 coordinates ATP. Arg497 contacts L-aspartate. Residue 542-545 (GIDR) coordinates ATP.

It belongs to the class-II aminoacyl-tRNA synthetase family. Type 1 subfamily. Homodimer.

The protein resides in the cytoplasm. The catalysed reaction is tRNA(Asx) + L-aspartate + ATP = L-aspartyl-tRNA(Asx) + AMP + diphosphate. Functionally, aspartyl-tRNA synthetase with relaxed tRNA specificity since it is able to aspartylate not only its cognate tRNA(Asp) but also tRNA(Asn). Reaction proceeds in two steps: L-aspartate is first activated by ATP to form Asp-AMP and then transferred to the acceptor end of tRNA(Asp/Asn). This chain is Aspartate--tRNA(Asp/Asn) ligase, found in Rickettsia conorii (strain ATCC VR-613 / Malish 7).